Here is a 405-residue protein sequence, read N- to C-terminus: Deoxyguanosinetriphosphate triphosphohydrolase-like protein (405 aa).

Positions 75–219 (RLTHTIEVAQ…AAIADDIAYN (145 aa)) constitute an HD domain.

The protein belongs to the dGTPase family. Type 2 subfamily.

In Agrobacterium fabrum (strain C58 / ATCC 33970) (Agrobacterium tumefaciens (strain C58)), this protein is Deoxyguanosinetriphosphate triphosphohydrolase-like protein.